The primary structure comprises 582 residues: Glutaredoxin domain-containing cysteine-rich protein CG12206 (582 aa).

A compositionally biased stretch (polar residues) spans 217–227 (CETLDSGTGSD). Disordered regions lie at residues 217-244 (CETL…VRSP) and 260-300 (EADH…SCDS). A compositionally biased stretch (low complexity) spans 291–300 (SSNSSLSCDS). The Glutaredoxin domain occupies 423–528 (NVKNYMEKDV…QLLRPYKSIA (106 aa)).

It belongs to the GRXCR1 family.

The chain is Glutaredoxin domain-containing cysteine-rich protein CG12206 from Drosophila melanogaster (Fruit fly).